The chain runs to 578 residues: MKLRNVEPRFLKAYNILMDKFGLFPFTYDMAEKVLKDNYENVNEVLSKLADAGLLEKTAKKEDKRKKIYKIKPLTTEKIEKVSKDKLIGLLKQGADLIRTQVDYKVLLLFLFFKAISDKYLLKVEELKKEFEDLDEEDIYVLANEEILELYDVEGKKLYVWHEVANNPEDFINALNKIVEMNKEKLSGLDELIKRTGLPTLFENENRHIVQHLINLFSRADFSEASYDILGDAYEWTLNYFAPTKAKEGEVYTPIEVSKLIAHLVEPKDDEVILDPACGSGSMLIEQYRFAGSNPNIVLVGQERNDVTAVLAKLNFILHGINLKDAKVFIGDSLLNPKFESFIXEVKGTGKADKVVANPPWNQDGYDENTLKVNEKYKDIYMYGFPNKNSADWAWVQLINYYTEKKAGIVLDSGALFRGGKEKTIRKRFVDDDLIEAVVLLPEKLFYNCPAPGIILILNKNKPEERKGKILFINASNEYIKHPEVKKLNKLSDENIEKIAKAYKEFKDVDGFCKVVDIEEIRKNDYNLNVSLYISPIEEDEDVDLGEVYEELNKLHNEYLEKFEVVKGYLEEINGLIK.

S-adenosyl-L-methionine is bound by residues 250–255 (EVYTPI), 280–282 (SGS), E303, and 332–333 (DS).

The protein belongs to the N(4)/N(6)-methyltransferase family. The type I restriction/modification system is composed of three polypeptides R, M and S.

It catalyses the reaction a 2'-deoxyadenosine in DNA + S-adenosyl-L-methionine = an N(6)-methyl-2'-deoxyadenosine in DNA + S-adenosyl-L-homocysteine + H(+). The subtype gamma methyltransferase (M) subunit of a type I restriction enzyme. The M and S subunits together form a methyltransferase (MTase) that methylates A-2 on the top and A-3 on the bottom strand of the sequence 5'-GAYN(5)GTAA-3'. In the presence of the R subunit the complex can also act as an endonuclease, binding to the same target sequence but cutting the DNA some distance from this site. Whether the DNA is cut or modified depends on the methylation state of the target sequence. When the target site is unmodified, the DNA is cut. When the target site is hemimethylated, the complex acts as a maintenance MTase modifying the DNA so that both strands become methylated. After locating a non-methylated recognition site, the enzyme complex serves as a molecular motor that translocates DNA in an ATP-dependent manner until a collision occurs that triggers cleavage. The chain is Type I restriction enzyme MjaVIII methylase subunit from Methanocaldococcus jannaschii (strain ATCC 43067 / DSM 2661 / JAL-1 / JCM 10045 / NBRC 100440) (Methanococcus jannaschii).